The sequence spans 172 residues: MILRRVFIAIGCVLFSPLSQANSSLGEVNIELRGNVVDFTCAVVAGDSNKSVNLGTWPTKQLHAAGDATQPVAFSLKLEGCPPGSASITFSGTPAPGTALLALADTAMAQKLAIEIRDGDQRRLPLEQASKAVDIDNNGNATLKFYANYIALADGVQPGLANADATFLINYN.

The signal sequence occupies residues 1-21; the sequence is MILRRVFIAIGCVLFSPLSQA. The cysteines at positions 41 and 81 are disulfide-linked.

It belongs to the fimbrial protein family.

Its subcellular location is the fimbrium. The sequence is that of Fimbrial-like protein FimF (fimF) from Salmonella typhimurium (strain LT2 / SGSC1412 / ATCC 700720).